A 437-amino-acid chain; its full sequence is Sulfite reductase, dissimilatory-type subunit alpha (437 aa).

Cys-177, Cys-183, Cys-221, Cys-225, Cys-284, Cys-303, Cys-306, and Cys-309 together coordinate [4Fe-4S] cluster. In terms of domain architecture, 4Fe-4S ferredoxin-type spans 294-322 (SKLSIDNKECVRCMHCINTMPRALHIGDE).

In terms of assembly, heterohexamer of two alpha, two beta and two gamma subunits.

Part of the complex that catalyzes the reduction of sulfite to sulfide. The alpha and beta subunits may have arisen by gene duplication. They both bind 2 iron-sulfur clusters, but the alpha subunit seems to be catalytically inactive, due to substitutions along the putative substrate access channel, and because it binds sirohydrochlorin (the dematallated form of siroheme) instead of siroheme. The protein is Sulfite reductase, dissimilatory-type subunit alpha (dsvA) of Nitratidesulfovibrio vulgaris (strain ATCC 29579 / DSM 644 / CCUG 34227 / NCIMB 8303 / VKM B-1760 / Hildenborough) (Desulfovibrio vulgaris).